The following is a 148-amino-acid chain: UPF0260 protein PM0539 (148 aa).

It belongs to the UPF0260 family.

This Pasteurella multocida (strain Pm70) protein is UPF0260 protein PM0539.